The primary structure comprises 385 residues: Cytochrome b (385 aa).

Helical transmembrane passes span 32–52 (MGSLLGLCLVIQILTGIFMAM), 76–98 (WLLRYTHANGASFFFAVMYMHMA), 113–133 (VWIIGVIIFVATMAAAFLGYC), and 179–199 (FFALHYLVPFIIAALVVMHFM). Heme b is bound by residues His-82 and His-96. Positions 183 and 197 each coordinate heme b. His-202 provides a ligand contact to a ubiquinone. 4 consecutive transmembrane segments (helical) span residues 225 to 245 (FIFKDLITVFVFLIIFSLFVF), 289 to 309 (LLGVITMFGAILVLLVLPLTD), 321 to 341 (ISKLFFFLFVFNFILLGVLGS), and 348 to 368 (FVQMGQYATFLYFAYFLIFVP).

The protein belongs to the cytochrome b family. Fungal cytochrome b-c1 complex contains 10 subunits; 3 respiratory subunits, 2 core proteins and 5 low-molecular weight proteins. Cytochrome b-c1 complex is a homodimer. Requires heme b as cofactor.

It is found in the mitochondrion inner membrane. Its function is as follows. Component of the ubiquinol-cytochrome c reductase complex (complex III or cytochrome b-c1 complex) that is part of the mitochondrial respiratory chain. The b-c1 complex mediates electron transfer from ubiquinol to cytochrome c. Contributes to the generation of a proton gradient across the mitochondrial membrane that is then used for ATP synthesis. This Monosporozyma servazzii (Yeast) protein is Cytochrome b (COB).